Consider the following 710-residue polypeptide: Mitochondrial intermediate peptidase (710 aa).

The N-terminal 33 residues, 1–33 (MLLAAGTRYAYRLCGRRAAAALQGRAGRSCARS), are a transit peptide targeting the mitochondrion. An N6-acetyllysine modification is found at lysine 124. Histidine 492 contacts Zn(2+). Residue glutamate 493 is part of the active site. 2 residues coordinate Zn(2+): histidine 496 and histidine 499.

This sequence belongs to the peptidase M3 family. As to quaternary structure, monomer. It depends on Zn(2+) as a cofactor.

It is found in the mitochondrion matrix. It carries out the reaction Release of an N-terminal octapeptide as second stage of processing of some proteins imported into the mitochondrion.. Activity is divalent cation-dependent. It is stimulated by manganese, magnesium or calcium ions and reversibly inhibited by zinc, cobalt and iron. Functionally, cleaves proteins, imported into the mitochondrion, to their mature size. This Rattus norvegicus (Rat) protein is Mitochondrial intermediate peptidase (Mipep).